The following is a 363-amino-acid chain: Phosphoserine aminotransferase (363 aa).

Arg42 is an L-glutamate binding site. Pyridoxal 5'-phosphate-binding positions include 76–77, Trp104, Thr155, Asp175, and Gln198; that span reads AR. At Lys199 the chain carries N6-(pyridoxal phosphate)lysine. Position 240 to 241 (240 to 241) interacts with pyridoxal 5'-phosphate; the sequence is NT.

Belongs to the class-V pyridoxal-phosphate-dependent aminotransferase family. SerC subfamily. As to quaternary structure, homodimer. Pyridoxal 5'-phosphate serves as cofactor.

Its subcellular location is the cytoplasm. It carries out the reaction O-phospho-L-serine + 2-oxoglutarate = 3-phosphooxypyruvate + L-glutamate. The enzyme catalyses 4-(phosphooxy)-L-threonine + 2-oxoglutarate = (R)-3-hydroxy-2-oxo-4-phosphooxybutanoate + L-glutamate. It functions in the pathway amino-acid biosynthesis; L-serine biosynthesis; L-serine from 3-phospho-D-glycerate: step 2/3. Its pathway is cofactor biosynthesis; pyridoxine 5'-phosphate biosynthesis; pyridoxine 5'-phosphate from D-erythrose 4-phosphate: step 3/5. Catalyzes the reversible conversion of 3-phosphohydroxypyruvate to phosphoserine and of 3-hydroxy-2-oxo-4-phosphonooxybutanoate to phosphohydroxythreonine. This is Phosphoserine aminotransferase (serC) from Edwardsiella ictaluri (strain 93-146).